Here is a 378-residue protein sequence, read N- to C-terminus: Alcohol dehydrogenase class-3 (378 aa).

Position 1 is an N-acetylalanine (Ala-1). Cys-46 is a Zn(2+) binding site. His-47 is an NAD(+) binding site. An alcohol-binding residues include Thr-48 and His-68. Zn(2+)-binding residues include His-68, Glu-69, Cys-98, Cys-101, Cys-104, Cys-112, and Cys-176. NAD(+)-binding positions include 201-206 (GLGTVG), Asp-225, Lys-230, 294-296 (VGV), 319-321 (TAF), and Arg-371.

The protein belongs to the zinc-containing alcohol dehydrogenase family. Class-III subfamily. As to quaternary structure, homodimer. Zn(2+) serves as cofactor.

The protein resides in the cytoplasm. It catalyses the reaction a primary alcohol + NAD(+) = an aldehyde + NADH + H(+). The catalysed reaction is a secondary alcohol + NAD(+) = a ketone + NADH + H(+). It carries out the reaction S-(hydroxymethyl)glutathione + NADP(+) = S-formylglutathione + NADPH + H(+). The enzyme catalyses S-(hydroxymethyl)glutathione + NAD(+) = S-formylglutathione + NADH + H(+). Functionally, class-III ADH is remarkably ineffective in oxidizing ethanol, but it readily catalyzes the oxidation of long-chain primary alcohols and the oxidation of S-(hydroxymethyl) glutathione. This chain is Alcohol dehydrogenase class-3, found in Pisum sativum (Garden pea).